Reading from the N-terminus, the 336-residue chain is Electron transfer flavoprotein subunit alpha (336 aa).

An FAD-binding site is contributed by 275 to 303; the sequence is LYIACGISGAIQHLAGMQDSDYIIAINKD.

It belongs to the ETF alpha-subunit/FixB family. As to quaternary structure, heterodimer of an alpha and a beta subunit. Requires FAD as cofactor.

Functionally, the electron transfer flavoprotein serves as a specific electron acceptor for other dehydrogenases. It transfers the electrons to the main respiratory chain via ETF-ubiquinone oxidoreductase (ETF dehydrogenase). The polypeptide is Electron transfer flavoprotein subunit alpha (etfA) (Clostridium acetobutylicum (strain ATCC 824 / DSM 792 / JCM 1419 / IAM 19013 / LMG 5710 / NBRC 13948 / NRRL B-527 / VKM B-1787 / 2291 / W)).